An 883-amino-acid polypeptide reads, in one-letter code: DNA topoisomerase 1 (883 aa).

Residues proline 2–threonine 126 form the Toprim domain. Mg(2+) is bound by residues glutamate 8 and aspartate 95. The Topo IA-type catalytic domain occupies aspartate 141–glutamate 583. Residues serine 175 to glutamine 180 form an interaction with DNA region. The tract at residues serine 271–serine 294 is disordered. Tyrosine 320 functions as the O-(5'-phospho-DNA)-tyrosine intermediate in the catalytic mechanism. A disordered region spans residues alanine 842–arginine 883. Residues arginine 867–arginine 883 are compositionally biased toward basic residues.

The protein belongs to the type IA topoisomerase family. Monomer. The cofactor is Mg(2+).

It catalyses the reaction ATP-independent breakage of single-stranded DNA, followed by passage and rejoining.. Its function is as follows. Releases the supercoiling and torsional tension of DNA, which is introduced during the DNA replication and transcription, by transiently cleaving and rejoining one strand of the DNA duplex. Introduces a single-strand break via transesterification at a target site in duplex DNA. The scissile phosphodiester is attacked by the catalytic tyrosine of the enzyme, resulting in the formation of a DNA-(5'-phosphotyrosyl)-enzyme intermediate and the expulsion of a 3'-OH DNA strand. The free DNA strand then undergoes passage around the unbroken strand, thus removing DNA supercoils. Finally, in the religation step, the DNA 3'-OH attacks the covalent intermediate to expel the active-site tyrosine and restore the DNA phosphodiester backbone. This is DNA topoisomerase 1 from Synechococcus elongatus (strain ATCC 33912 / PCC 7942 / FACHB-805) (Anacystis nidulans R2).